A 230-amino-acid chain; its full sequence is Ubiquitin carboxyl-terminal hydrolase isozyme L3 (230 aa).

In terms of domain architecture, UCH catalytic spans 5-229; the sequence is RWLPLEANPE…LRFNAIALSA (225 aa). An interaction with ubiquitin region spans residues 8–13; it reads PLEANP. Cys95 acts as the Nucleophile in catalysis. Ser130 bears the Phosphoserine mark. The tract at residues 152–159 is interaction with ubiquitin. Crossover loop which restricts access of large ubiquitin adducts to the active site; that stretch reads AHEGQTEA. His169 (proton donor) is an active-site residue. The interval 219 to 224 is interaction with ubiquitin; sequence ELRFNA.

This sequence belongs to the peptidase C12 family. In terms of assembly, preferentially binds diubiquitin; the interaction does not hydrolyze diubiquitin but, in vitro, inhibits the hydrolyzing activity on other substrates. As to expression, ubiquitously expressed, with highest levels in brain, liver, heart, thymus, kidney and testis. Highly expressed in the cauda epididymidis, in meiotic pachytene spermatocytes and post-meiotic spematids. In the retina, enriched in the photoreceptor inner segment.

It is found in the cytoplasm. It carries out the reaction Thiol-dependent hydrolysis of ester, thioester, amide, peptide and isopeptide bonds formed by the C-terminal Gly of ubiquitin (a 76-residue protein attached to proteins as an intracellular targeting signal).. Its activity is regulated as follows. Inhibited by monoubiquitin and diubiquitin. Deubiquitinating enzyme (DUB) that controls levels of cellular ubiquitin through processing of ubiquitin precursors and ubiquitinated proteins. Thiol protease that recognizes and hydrolyzes a peptide bond at the C-terminal glycine of either ubiquitin or NEDD8. Has a 10-fold preference for Arg and Lys at position P3'', and exhibits a preference towards 'Lys-48'-linked ubiquitin chains. Deubiquitinates ENAC in apical compartments, thereby regulating apical membrane recycling. Indirectly increases the phosphorylation of IGFIR, AKT and FOXO1 and promotes insulin-signaling and insulin-induced adipogenesis. Required for stress-response retinal, skeletal muscle and germ cell maintenance. May be involved in working memory. Can hydrolyze UBB(+1), a mutated form of ubiquitin which is not effectively degraded by the proteasome. The sequence is that of Ubiquitin carboxyl-terminal hydrolase isozyme L3 (Uchl3) from Mus musculus (Mouse).